Consider the following 427-residue polypeptide: L-rhamnose isomerase (427 aa).

Residues histidine 264, aspartate 296, and aspartate 298 each contribute to the Mn(2+) site.

It belongs to the rhamnose isomerase family. It depends on Mn(2+) as a cofactor.

Its subcellular location is the cytoplasm. The catalysed reaction is L-rhamnopyranose = L-rhamnulose. It functions in the pathway carbohydrate degradation; L-rhamnose degradation; glycerone phosphate from L-rhamnose: step 1/3. Functionally, catalyzes the interconversion of L-rhamnose and L-rhamnulose. This chain is L-rhamnose isomerase, found in Lactiplantibacillus plantarum (strain ATCC BAA-793 / NCIMB 8826 / WCFS1) (Lactobacillus plantarum).